Here is a 494-residue protein sequence, read N- to C-terminus: Ketol-acid reductoisomerase (NADP(+)) (494 aa).

The KARI N-terminal Rossmann domain maps to 14-208 (LDQIGRCRFM…GGDRAGVLES (195 aa)). NADP(+) contacts are provided by residues 45–48 (CGAQ), arginine 68, arginine 76, serine 78, and 108–110 (DKQ). Histidine 132 is a catalytic residue. Glycine 158 serves as a coordination point for NADP(+). 2 KARI C-terminal knotted domains span residues 209 to 344 (SFVA…NAPE) and 345 to 487 (YNGK…MTDM). Residues aspartate 217, glutamate 221, glutamate 389, and glutamate 393 each coordinate Mg(2+). A substrate-binding site is contributed by serine 414.

The protein belongs to the ketol-acid reductoisomerase family. Mg(2+) is required as a cofactor.

It carries out the reaction (2R)-2,3-dihydroxy-3-methylbutanoate + NADP(+) = (2S)-2-acetolactate + NADPH + H(+). It catalyses the reaction (2R,3R)-2,3-dihydroxy-3-methylpentanoate + NADP(+) = (S)-2-ethyl-2-hydroxy-3-oxobutanoate + NADPH + H(+). The protein operates within amino-acid biosynthesis; L-isoleucine biosynthesis; L-isoleucine from 2-oxobutanoate: step 2/4. It participates in amino-acid biosynthesis; L-valine biosynthesis; L-valine from pyruvate: step 2/4. Functionally, involved in the biosynthesis of branched-chain amino acids (BCAA). Catalyzes an alkyl-migration followed by a ketol-acid reduction of (S)-2-acetolactate (S2AL) to yield (R)-2,3-dihydroxy-isovalerate. In the isomerase reaction, S2AL is rearranged via a Mg-dependent methyl migration to produce 3-hydroxy-3-methyl-2-ketobutyrate (HMKB). In the reductase reaction, this 2-ketoacid undergoes a metal-dependent reduction by NADPH to yield (R)-2,3-dihydroxy-isovalerate. The sequence is that of Ketol-acid reductoisomerase (NADP(+)) from Pseudoalteromonas atlantica (strain T6c / ATCC BAA-1087).